The sequence spans 394 residues: ATP phosphoribosyltransferase regulatory subunit (394 aa).

The protein belongs to the class-II aminoacyl-tRNA synthetase family. HisZ subfamily. Heteromultimer composed of HisG and HisZ subunits.

The protein localises to the cytoplasm. It functions in the pathway amino-acid biosynthesis; L-histidine biosynthesis; L-histidine from 5-phospho-alpha-D-ribose 1-diphosphate: step 1/9. Required for the first step of histidine biosynthesis. May allow the feedback regulation of ATP phosphoribosyltransferase activity by histidine. In Pseudomonas paraeruginosa (strain DSM 24068 / PA7) (Pseudomonas aeruginosa (strain PA7)), this protein is ATP phosphoribosyltransferase regulatory subunit.